Reading from the N-terminus, the 85-residue chain is MKLSLLLVISASMLIDGLVNADGYIRGSNGCKVSCLWGNDGCNKECRAYGASYGYCWTWGLACWCEGLPDDKTWKSESNTCGGKK.

The signal sequence occupies residues 1 to 21 (MKLSLLLVISASMLIDGLVNA). Positions 22–82 (DGYIRGSNGC…TWKSESNTCG (61 aa)) constitute an LCN-type CS-alpha/beta domain. Cystine bridges form between cysteine 31/cysteine 81, cysteine 35/cysteine 56, cysteine 42/cysteine 63, and cysteine 46/cysteine 65.

The protein belongs to the long (4 C-C) scorpion toxin superfamily. Sodium channel inhibitor family. Beta subfamily. In terms of tissue distribution, expressed by the venom gland.

Its subcellular location is the secreted. Functionally, binds to sodium channels (Nav) and inhibits them. Recombinant ANEP delays the convulsion seizure of insect models by 18% and shows anti-neuroexcitatory activity. In Olivierus martensii (Manchurian scorpion), this protein is Anti-neuroexcitation peptide 2.